A 282-amino-acid polypeptide reads, in one-letter code: V-set domain-containing T-cell activation inhibitor 1 (282 aa).

The N-terminal stretch at 1-24 (MASLGQIIFWSIINVIIILAGAIV) is a signal peptide. Ig-like V-type domains lie at 35-144 (HFIT…ANLE) and 153-241 (PEIN…IKVT). 2 disulfides stabilise this stretch: cysteine 56-cysteine 130 and cysteine 168-cysteine 225. N-linked (GlcNAc...) asparagine glycosylation occurs at asparagine 216. Glycine 257 is lipidated: GPI-anchor amidated glycine. The propeptide at 258 to 282 (PSPCVSSVSAAGWALLSLSCCLMLR) is removed in mature form.

It belongs to the immunoglobulin superfamily. BTN/MOG family. Post-translationally, N-glycosylated.

The protein localises to the cell membrane. Negatively regulates T-cell-mediated immune response by inhibiting T-cell activation, proliferation, cytokine production and development of cytotoxicity. When expressed on the cell surface of tumor macrophages, plays an important role, together with regulatory T-cells (Treg), in the suppression of tumor-associated antigen-specific T-cell immunity. Involved in promoting epithelial cell transformation. In Rattus norvegicus (Rat), this protein is V-set domain-containing T-cell activation inhibitor 1.